We begin with the raw amino-acid sequence, 286 residues long: Probable biotin transporter (286 aa).

2 EamA domains span residues 3-128 and 139-277; these read YLLF…AIIR and GFLL…LWVN. 10 helical membrane passes run 4 to 24, 26 to 46, 56 to 76, 81 to 101, 109 to 129, 136 to 156, 174 to 194, 203 to 223, 234 to 254, and 258 to 280; these read LLFV…YLAG, VDSY…FLPL, FVGG…VCLY, VLTV…VALF, FNFW…IIRY, FLQG…GQVL, FGYF…LFGD, LQWG…QFWW, TLAV…LLIW, and ADLP…NRLG.

Belongs to the drug/metabolite transporter (DMT) superfamily. 10 TMS drug/metabolite exporter (DME) (TC 2.A.7.3) family.

It is found in the cell inner membrane. It carries out the reaction biotin(in) = biotin(out). In terms of biological role, uptake of biotin. The sequence is that of Probable biotin transporter from Pseudomonas aeruginosa (strain ATCC 15692 / DSM 22644 / CIP 104116 / JCM 14847 / LMG 12228 / 1C / PRS 101 / PAO1).